The sequence spans 745 residues: Ankyrin repeat and protein kinase domain-containing protein 1 (745 aa).

The Protein kinase domain maps to 34 to 301 (EEEWHLVASG…NVAVETDMLL (268 aa)). Residues 40 to 48 (VASGGFSKV) and Lys63 each bind ATP. Residue Asp157 is the Proton acceptor of the active site. ANK repeat units follow at residues 369–398 (NRVTPLHFLVAGGSLEQVRLLLSHDVDVDC), 402–431 (SGYTPLLIATQDQQPDLCALLLAHGADTNL), 435–464 (DGWAPLHFAAQNGDDHTARLLLDHGALVNA), 468–497 (EGWTPLHLAAQNNFENVARLLVSRQADLSP), 501–530 (EGKTPLHVAAYFGHIGLVKLLSGQGAELDA), 534–563 (NLRTPLHLAVERGKVRAIQHLLKCGALPDA), 567–596 (SGYSPLHIAAARGKDLIFKMLLRYGASLEL), 600–629 (QGWTPLHLATYKGHLEIIHQLAKSHVDLDA), 633–662 (MQWTPLHLAAFQGEEGVMLALLQCGANPNA), 666–695 (SGWTPLHLAVHKGTFLGITHLLEYGADIHA), and 699–728 (VGWTPAHLAALKGNTAILKVLVKAAAQVDV).

Belongs to the protein kinase superfamily. TKL Ser/Thr protein kinase family.

It catalyses the reaction L-seryl-[protein] + ATP = O-phospho-L-seryl-[protein] + ADP + H(+). It carries out the reaction L-threonyl-[protein] + ATP = O-phospho-L-threonyl-[protein] + ADP + H(+). The protein is Ankyrin repeat and protein kinase domain-containing protein 1 (Ankk1) of Mus musculus (Mouse).